The chain runs to 291 residues: Methylsterol monooxygenase 1-3 (291 aa).

A run of 3 helical transmembrane segments spans residues Thr41–Trp61, Phe92–Ile112, and Ser114–Ile134. The 136-residue stretch at Leu128–Thr263 folds into the Fatty acid hydroxylase domain. The short motif at His143–His147 is the Histidine box-1 element. A Histidine box-2 motif is present at residues His156 to His160. Residues Ile178–Thr198 form a helical membrane-spanning segment. Residues Tyr235–Tyr241 carry the Histidine box-3 motif.

Belongs to the sterol desaturase family. In terms of assembly, interacts with ACBP1. The cofactor is Fe cation. Expressed at low levels in leaves, roots, siliques and flowers.

The protein localises to the endoplasmic reticulum membrane. It catalyses the reaction 4,4-dimethyl-5alpha-cholest-7-en-3beta-ol + 6 Fe(II)-[cytochrome b5] + 3 O2 + 5 H(+) = 4alpha-carboxy-4beta-methyl-5alpha-cholest-7-ene-3beta-ol + 6 Fe(III)-[cytochrome b5] + 4 H2O. The enzyme catalyses 24-methylidenelophenol + 6 Fe(II)-[cytochrome b5] + 3 O2 + 5 H(+) = 4alpha-carboxy-ergosta-7,24(24(1))-dien-3beta-ol + 6 Fe(III)-[cytochrome b5] + 4 H2O. In terms of biological role, non-heme iron oxygenase involved in sterols biosynthesis by catalyzing the removal of the first methyl group at the C-4 position. 4,4-dimethyl-9-beta,19-cyclopropylsterols such as 24-methylenecycloartanol are the preferred substrates. This is Methylsterol monooxygenase 1-3 from Arabidopsis thaliana (Mouse-ear cress).